A 465-amino-acid polypeptide reads, in one-letter code: Glucose-1-phosphate adenylyltransferase (465 aa).

Alpha-D-glucose 1-phosphate contacts are provided by residues Gly164, 181–182 (EK), and Ser199.

The protein belongs to the bacterial/plant glucose-1-phosphate adenylyltransferase family. In terms of assembly, homotetramer.

It catalyses the reaction alpha-D-glucose 1-phosphate + ATP + H(+) = ADP-alpha-D-glucose + diphosphate. The protein operates within glycan biosynthesis; glycogen biosynthesis. In terms of biological role, involved in the biosynthesis of ADP-glucose, a building block required for the elongation reactions to produce glycogen. Catalyzes the reaction between ATP and alpha-D-glucose 1-phosphate (G1P) to produce pyrophosphate and ADP-Glc. The chain is Glucose-1-phosphate adenylyltransferase from Arthrobacter sp. (strain FB24).